Here is a 259-residue protein sequence, read N- to C-terminus: Ferritin-2, chloroplastic (259 aa).

The N-terminal 52 residues, 1-52 (MLLKLAPAFTLLNSHGENLSPMLSTSSQGFVLKNFSTKSRNGLLVVCASKGS), are a transit peptide targeting the chloroplast. Residues 53–85 (NTKPLTGVVFEPFEEVKKELMLVPTVPQVSLAR) form an extension peptide (EP) region. Residues 86–239 (HKYSDQCEAA…EYVAQLRRVG (154 aa)) enclose the Ferritin-like diiron domain. Fe cation-binding residues include E103, E138, H141, and Q221.

Belongs to the ferritin family. As to quaternary structure, oligomer of 24 subunits. There are two types of subunits: L (light) chain and H (heavy) chain. The major chain can be light or heavy, depending on the species and tissue type. The functional molecule forms a roughly spherical shell with a diameter of 12 nm and contains a central cavity into which the insoluble mineral iron core is deposited.

It is found in the plastid. The protein resides in the chloroplast. The catalysed reaction is 4 Fe(2+) + O2 + 4 H(+) = 4 Fe(3+) + 2 H2O. Stores iron in a soluble, non-toxic, readily available form. Important for iron homeostasis. Has ferroxidase activity. Iron is taken up in the ferrous form and deposited as ferric hydroxides after oxidation. This Nicotiana tabacum (Common tobacco) protein is Ferritin-2, chloroplastic (FER2).